The following is a 238-amino-acid chain: MSSRSYKRVLLKLSGEALMGDDAFGINRSTIVRMTDEIAEVAAMGVELAIVIGGGNIFRGVAPGAQGMDRATADYMGMMATIMNALALQDALKHKGLDTRVQSALNIDQVVEPYIRPKTLRYLEEGKVVIFAAGTGNPFFTTDTAAALRGAEIGAEIVLKATKVDGIYSADPNKDPTATRYARISFDEAIVRRLEVMDATAFALCRDQKLPIKVFSINKSGALKRVVGGEDEGTLVHV.

ATP is bound at residue 12–15 (KLSG). Glycine 54 contributes to the UMP binding site. Residues glycine 55 and arginine 59 each coordinate ATP. UMP is bound by residues aspartate 74 and 135-142 (TGNPFFTT). 3 residues coordinate ATP: threonine 162, tyrosine 168, and aspartate 171.

It belongs to the UMP kinase family. In terms of assembly, homohexamer.

Its subcellular location is the cytoplasm. It catalyses the reaction UMP + ATP = UDP + ADP. It functions in the pathway pyrimidine metabolism; CTP biosynthesis via de novo pathway; UDP from UMP (UMPK route): step 1/1. Inhibited by UTP. Its function is as follows. Catalyzes the reversible phosphorylation of UMP to UDP. This Bordetella avium (strain 197N) protein is Uridylate kinase.